Consider the following 338-residue polypeptide: Probable tRNA pseudouridine synthase B (338 aa).

The Nucleophile role is filled by aspartate 78. Residues 245–320 enclose the PUA domain; the sequence is LPKIILRDSA…LAATSVRIMM (76 aa).

This sequence belongs to the pseudouridine synthase TruB family. Type 2 subfamily.

The catalysed reaction is uridine(55) in tRNA = pseudouridine(55) in tRNA. Its function is as follows. Could be responsible for synthesis of pseudouridine from uracil-55 in the psi GC loop of transfer RNAs. The polypeptide is Probable tRNA pseudouridine synthase B (Methanosarcina barkeri (strain Fusaro / DSM 804)).